The chain runs to 141 residues: VLSAADKTNVKGVFSKIGGHADDYGAETLERMFIAYPQTKTYFPHFDLQHGSAQIKAHGKKVAAALVEAVNHIDDIAGALSKLSDLHAQKLRVDPVNFKFLGHCFLVVVAIHHPSALTPEVHASLDKFLCAVGAVLTAKYR.

The region spanning 1–141 (VLSAADKTNV…VGAVLTAKYR (141 aa)) is the Globin domain. An O2-binding site is contributed by histidine 58. Histidine 87 is a binding site for heme b.

It belongs to the globin family. In terms of assembly, heterotetramer of two alpha chains and two beta chains. As to expression, red blood cells.

In terms of biological role, involved in oxygen transport from the lung to the various peripheral tissues. This Cygnus olor (Mute swan) protein is Hemoglobin subunit alpha-A (HBAA).